A 182-amino-acid chain; its full sequence is MLKRRSNALITLSRTKLFPITTVAYYHRRLLNQQRRAVSTSPKKEIKSLEDLANLDSLDGVDTELIRDLINEHTTKLNIKKELDMLKKFSQEEESGHEIPVKRFIRPLWMFILMGSSVYLLLHFSWWKLEHEERESQLKKEVEILEHQLNELIVQDKTHNTSRGKGSNESTHMKPWYRRWFW.

The transit peptide at 1-45 directs the protein to the mitochondrion; the sequence is MLKRRSNALITLSRTKLFPITTVAYYHRRLLNQQRRAVSTSPKKE. Topologically, residues 46 to 107 are mitochondrial matrix; sequence IKSLEDLANL…EIPVKRFIRP (62 aa). The helical transmembrane segment at 108-127 threads the bilayer; it reads LWMFILMGSSVYLLLHFSWW. Residues 128–158 are a coiled coil; sequence KLEHEERESQLKKEVEILEHQLNELIVQDKT. Residues 128–182 lie on the Mitochondrial intermembrane side of the membrane; that stretch reads KLEHEERESQLKKEVEILEHQLNELIVQDKTHNTSRGKGSNESTHMKPWYRRWFW.

It belongs to the INA17 family. As to quaternary structure, component of the inner membrane assembly (INA) complex, composed of INA17 and INA22. Interacts with a subset of F(1)F(0)-ATP synthase subunits of the F(1)-domain and the peripheral stalk.

It is found in the mitochondrion inner membrane. Functionally, component of the INA complex (INAC) that promotes the biogenesis of mitochondrial F(1)F(0)-ATP synthase. INAC facilitates the assembly of the peripheral stalk and promotes the assembly of the catalytic F(1)-domain with the membrane-embedded F(0)-domain. This Saccharomyces cerevisiae (strain RM11-1a) (Baker's yeast) protein is Inner membrane assembly complex subunit 17.